The primary structure comprises 256 residues: MGHWNRIKIAKCQILITNFLVLLLGLSMATMVVVIHFGDHFTVIGHASLERNPYETLRYWAFYVGISLAGLLSLGAALSTIATVREAHGLMAAGFLCFALSFCILVQVAFWRFYNPTQVEDAVLDTYDFVYDQAMKSPSSNWWQELAVIQDTFLCCGKKSPFGLLVSTGAIMCQGREAMREDCLQSIRNVLWTHYSIASILTCTSLALTVYAMMLCAFLWFAIHSYHGLDRKGRYSLTPPRSHGFQTQEPSLFRWT.

4 consecutive transmembrane segments (helical) span residues 15 to 35, 61 to 81, 90 to 110, and 203 to 223; these read LITN…VVVI, AFYV…LSTI, LMAA…QVAF, and CTSL…WFAI.

Belongs to the tetraspanin (TM4SF) family. As to expression, expressed exclusively in hematopoietic tissues. Expression detected in spleen, thymus, bone marrow and peripheral blood leukocytes but not in heart, brain, lung, liver, kidney or testis.

Its subcellular location is the membrane. This chain is Tetraspanin-32 (Tspan32), found in Mus musculus (Mouse).